The sequence spans 602 residues: Glutamyl-tRNA(Gln) amidotransferase subunit B, mitochondrial (602 aa).

Residues 1 to 52 (MLQQWLRQSPAAAGLLRCSRYRGPQAALLQLSPQRAPTYHAIRSLQTSAAES) constitute a mitochondrion transit peptide. Positions 61 to 83 (QLKQGAKGLKAQKRQRRESEEAS) are disordered.

This sequence belongs to the GatB/GatE family. GatB subfamily. As to quaternary structure, subunit of the heterotrimeric GatCAB amidotransferase (AdT) complex, composed of A, B and C subunits.

The protein localises to the mitochondrion. The enzyme catalyses L-glutamyl-tRNA(Gln) + L-glutamine + ATP + H2O = L-glutaminyl-tRNA(Gln) + L-glutamate + ADP + phosphate + H(+). Functionally, allows the formation of correctly charged Gln-tRNA(Gln) through the transamidation of misacylated Glu-tRNA(Gln) in the mitochondria. The reaction takes place in the presence of glutamine and ATP through an activated gamma-phospho-Glu-tRNA(Gln). In Aspergillus clavatus (strain ATCC 1007 / CBS 513.65 / DSM 816 / NCTC 3887 / NRRL 1 / QM 1276 / 107), this protein is Glutamyl-tRNA(Gln) amidotransferase subunit B, mitochondrial.